A 316-amino-acid polypeptide reads, in one-letter code: Putative transketolase C-terminal section (316 aa).

This sequence belongs to the transketolase family. Thiamine diphosphate is required as a cofactor.

The enzyme catalyses D-sedoheptulose 7-phosphate + D-glyceraldehyde 3-phosphate = aldehydo-D-ribose 5-phosphate + D-xylulose 5-phosphate. The chain is Putative transketolase C-terminal section from Methanocaldococcus jannaschii (strain ATCC 43067 / DSM 2661 / JAL-1 / JCM 10045 / NBRC 100440) (Methanococcus jannaschii).